Here is a 217-residue protein sequence, read N- to C-terminus: MQSRLISIAASEGFTFHHAERNESTLTLWLKDGPSKLPGYATHQVGVAGAVLDEDNGKVLVVQDRNKTVNAWKFPGGLSDQGEDIGATAVREVLEETGIHSEFKSLLSIRQQHNHPGAFGKSDLYIICRLKPLSYTINFCHQECLKCEWMDLQELAYCSNTTIITSRVAKLLLYGYNEGFHLVDLTMRTFPAVYSGLFYSLYHKELPETYEGSATLL.

The Nudix hydrolase domain maps to 42 to 177; sequence THQVGVAGAV…VAKLLLYGYN (136 aa). Positions 77–98 match the Nudix box motif; it reads GLSDQGEDIGATAVREVLEETG.

This sequence belongs to the Nudix hydrolase family. As to expression, detected in liver (at protein level).

The protein resides in the cytoplasm. It localises to the nucleus. The protein localises to the mitochondrion. May contribute to the regulation of cell proliferation. This is Nucleoside diphosphate-linked moiety X motif 6 (nudt6) from Xenopus laevis (African clawed frog).